The chain runs to 600 residues: Elongation factor 4 (600 aa).

In terms of domain architecture, tr-type G spans 6 to 188; that stretch reads QFIRNFSIIA…QITKQIPSPK (183 aa). Residues 18–23 and 135–138 contribute to the GTP site; these read DHGKST and NKID.

It belongs to the TRAFAC class translation factor GTPase superfamily. Classic translation factor GTPase family. LepA subfamily.

It localises to the cell inner membrane. The enzyme catalyses GTP + H2O = GDP + phosphate + H(+). Functionally, required for accurate and efficient protein synthesis under certain stress conditions. May act as a fidelity factor of the translation reaction, by catalyzing a one-codon backward translocation of tRNAs on improperly translocated ribosomes. Back-translocation proceeds from a post-translocation (POST) complex to a pre-translocation (PRE) complex, thus giving elongation factor G a second chance to translocate the tRNAs correctly. Binds to ribosomes in a GTP-dependent manner. In Leptospira interrogans serogroup Icterohaemorrhagiae serovar copenhageni (strain Fiocruz L1-130), this protein is Elongation factor 4.